Reading from the N-terminus, the 234-residue chain is Large ribosomal subunit protein uL1 (234 aa).

This sequence belongs to the universal ribosomal protein uL1 family. Part of the 50S ribosomal subunit.

Binds directly to 23S rRNA. The L1 stalk is quite mobile in the ribosome, and is involved in E site tRNA release. Its function is as follows. Protein L1 is also a translational repressor protein, it controls the translation of the L11 operon by binding to its mRNA. This is Large ribosomal subunit protein uL1 from Anaeromyxobacter sp. (strain Fw109-5).